We begin with the raw amino-acid sequence, 551 residues long: Probable CoA ligase CCL5 (551 aa).

ATP-binding positions include 204-212 (SSGTTGASK), 345-350 (QGYGLT), D431, 443-446 (VVDR), and K537. The interval 274 to 345 (EIHEMLSAIE…ENYPTVSILQ (72 aa)) is SBD1. The segment at 346 to 410 (GYGLTESTGI…LRGPTIMKGY (65 aa)) is SBD2.

Belongs to the ATP-dependent AMP-binding enzyme family. Mostly expressed at low levels in glandular trichomes (lupulin glands) after flowering, and, to a lower extent, in stems, leaves, cones and flowers.

The protein resides in the cytoplasm. The protein localises to the cytosol. This Humulus lupulus (European hop) protein is Probable CoA ligase CCL5.